Consider the following 340-residue polypeptide: Short-chain dehydrogenase/reductase prx1 (340 aa).

Residues Ile-60, Lys-84, Asp-104, Asn-131, and Lys-162 each contribute to the NADP(+) site. Ser-184 (proton donor) is an active-site residue. The NADP(+) site is built by Tyr-210 and Lys-214. The active-site Proton acceptor is Tyr-210. Lys-214 acts as the Lowers pKa of active site Tyr in catalysis.

This sequence belongs to the short-chain dehydrogenases/reductases (SDR) family.

Its pathway is sesquiterpene biosynthesis. In terms of biological role, short-chain dehydrogenase/reductase; part of the gene cluster that mediates the biosynthesis of PR-toxin, a bicyclic sesquiterpene belonging to the eremophilane class and acting as a mycotoxin. The first step of the pathway is catalyzed by the aristolochene synthase which performs the cyclization of trans,trans-farnesyl diphosphate (FPP) to the bicyclic sesquiterpene aristolochene. Following the formation of aristolochene, the non-oxygenated aristolochene is converted to the trioxygenated intermediate eremofortin B, via 7-epi-neopetasone. This conversion appears to involve three enzymes, a hydroxysterol oxidase-like enzyme, the quinone-oxidase prx3 that forms the quinone-type-structure in the bicyclic nucleus of aristolochene with the C8-oxo group and the C-3 hydroxyl group, and the P450 monooxygenase prx9 that introduces the epoxide at the double bond between carbons 1 and 2. No monoxy or dioxy-intermediates have been reported to be released to the broth, so these three early oxidative reactions may be coupled together. Eremofortin B is further oxidized by another P450 monooxygenase, that introduces a second epoxide between carbons 7 and 11 prior to acetylation to eremofortin A by the acetyltransferase prx11. The second epoxidation may be performed by a second P450 monooxygenase. After the acetylation step, eremofortin A is converted to eremofortin C and then to PR-toxin. First the conversion of eremofortin A to eremofortin C proceeds by oxidation of the side chain of the molecule at C-12 and is catalyzed by the short-chain oxidoreductase prx1. The cytochrome P450 monooxygenase prx8 also plays a role in this step. The primary alcohol formed at C-12 is finally oxidized by the short-chain alcohol dehydrogenase prx4 that forms PR-toxin. In Penicillium rubens (strain ATCC 28089 / DSM 1075 / NRRL 1951 / Wisconsin 54-1255) (Penicillium chrysogenum), this protein is Short-chain dehydrogenase/reductase prx1.